We begin with the raw amino-acid sequence, 872 residues long: MKELSSAQIRQMWLDFWKSKGHSVEPSANLVPVNDPTLLWINSGVATLKKYFDGSVIPENPRITNAQKSIRTNDIENVGKTARHHTMFEMLGNFSIGDYFRDEAIEWGFELLTSPEWFDFPKDKLYMTYYPDDKDSYNRWIACGVEPSHLVPIEDNFWEIGAGPSGPDTEIFFDRGEDFDPDNIGLRLLAEDIENDRYIEIWNIVLSQFNADPAVPRSEYKELPNKNIDTGAGLERLAAVMQGAKTNFETDLFMPIIREVEKLSGKTYDPDGDNMSFKVIADHIRALSFAIGDGALPGNEGRGYVLRRLLRRAVMHGRRLGINETFLYKLVPTVGQIMESYYPEVLEKRDFIEKIVKREEETFARTIDAGSGHLDSLLAQLKAEGKDTLEGKDIFKLYDTYGFPVELTEELAEDAGYKIDHEGFKSAMKEQQDRARAAVVKGGSMGMQNETLAGIVEESRFEYDTYSLESSLSVIIADNERTEAVSEGQALLVFAQTPFYAEMGGQVADTGRIKNDKGDTVAEVVDVQKAPNGQPLHTVNVLASLSVGTNYTLEINKERRLAVEKNHTATHLLHAALHNVIGEHATQAGSLNEEEFLRFDFTHFEAVSNEELRHIEQEVNEQIWNALTITTTETDVETAKEMGAMALFGEKYGKVVRVVQIGNYSVELCGGTHLNNSSEIGLFKIVKEEGIGSGTRRIIAVTGRQAFEAYRNQEDALKEIAATVKAPQLKDAAAKVQALSDSLRDLQKENVELKEKAAAAAAGDVFKDIQEAKGVRFIASQVDVADAGALRTFADNWKQKDYSDVLVLVAAIGEKVNVLVASKTKDVHAGNMIKGLAPIVAGRGGGKPDMAMAGGSDASKIAELLAAVAENL.

H567, H571, C669, and H673 together coordinate Zn(2+).

Belongs to the class-II aminoacyl-tRNA synthetase family. The cofactor is Zn(2+).

The protein localises to the cytoplasm. The enzyme catalyses tRNA(Ala) + L-alanine + ATP = L-alanyl-tRNA(Ala) + AMP + diphosphate. In terms of biological role, catalyzes the attachment of alanine to tRNA(Ala) in a two-step reaction: alanine is first activated by ATP to form Ala-AMP and then transferred to the acceptor end of tRNA(Ala). Also edits incorrectly charged Ser-tRNA(Ala) and Gly-tRNA(Ala) via its editing domain. The chain is Alanine--tRNA ligase from Streptococcus agalactiae serotype III (strain NEM316).